The chain runs to 274 residues: Large ribosomal subunit protein uL2 (274 aa).

The interval 223-258 (VAMNPVDHPHGGGEGRTSGGRHPVTPWGIPTKGYKT) is disordered.

It belongs to the universal ribosomal protein uL2 family. As to quaternary structure, part of the 50S ribosomal subunit. Forms a bridge to the 30S subunit in the 70S ribosome.

Its function is as follows. One of the primary rRNA binding proteins. Required for association of the 30S and 50S subunits to form the 70S ribosome, for tRNA binding and peptide bond formation. It has been suggested to have peptidyltransferase activity; this is somewhat controversial. Makes several contacts with the 16S rRNA in the 70S ribosome. The polypeptide is Large ribosomal subunit protein uL2 (Geotalea daltonii (strain DSM 22248 / JCM 15807 / FRC-32) (Geobacter daltonii)).